The following is a 76-amino-acid chain: Large ribosomal subunit protein uL29 (76 aa).

The protein belongs to the universal ribosomal protein uL29 family.

In Corynebacterium glutamicum (strain R), this protein is Large ribosomal subunit protein uL29.